Here is a 137-residue protein sequence, read N- to C-terminus: Methylmalonyl-CoA decarboxylase subunit delta (137 aa).

A helical membrane pass occupies residues 30–50 (VTVVLGMGITVVALIFLMYII).

This sequence belongs to the OadG family. As to quaternary structure, the methylmalonyl-CoA decarboxylase is composed of four subunits: the carboxyltransferase alpha subunit (MmdA), the tunnel beta subunit (MmdB), the biotin-containing gamma subunit (MmdC) and the delta subunit (MmdD).

Its subcellular location is the cell membrane. The enzyme catalyses (S)-methylmalonyl-CoA + Na(+)(in) + H(+)(out) = propanoyl-CoA + Na(+)(out) + CO2. Functionally, subunit of the sodium ion pump methylmalonyl-CoA decarboxylase, which converts the chemical energy of a decarboxylation reaction into an electrochemical gradient of Na(+) ions across the cytoplasmic membrane, thereby creating a sodium ion motive force that is used for ATP synthesis. The delta subunit is required for catalytic activity as well as for the proper assembly of the individual subunits to an enzyme complex. The protein is Methylmalonyl-CoA decarboxylase subunit delta of Propionigenium modestum.